Reading from the N-terminus, the 766-residue chain is Probable serine/threonine-protein kinase KKQ8 (766 aa).

Disordered stretches follow at residues 1-165 (MPEH…DTSS), 201-240 (GHYA…AAQL), 277-297 (SDAN…LDLP), 362-384 (TRSH…DDPS), and 417-437 (AAKN…AGVQ). Residues 14 to 25 (RSLSLGSSMRSL) show a composition bias toward low complexity. A compositionally biased stretch (basic and acidic residues) spans 49-64 (VDIRVDTASASREHTP). The segment covering 94-120 (LTPTNSNPQSKSGSPVSQNTSQESLIT) has biased composition (polar residues). Over residues 127–137 (EDYRPSKDSRR) the composition is skewed to basic and acidic residues. Polar residues-rich tracts occupy residues 140 to 165 (RNAS…DTSS) and 214 to 223 (PTSSRVPSRS). Residues 288 to 297 (SKNDGHLDLP) are compositionally biased toward basic and acidic residues. A compositionally biased stretch (acidic residues) spans 372-382 (DSSDDDEELDD). Over residues 419–430 (KNKHNQSSKHRT) the composition is skewed to basic residues. The Protein kinase domain maps to 449 to 752 (GKCVAVVGHG…IDKLLQTGWM (304 aa)). ATP-binding positions include 455-463 (VGHGAYGVV) and K493. The Proton acceptor role is filled by D603.

This sequence belongs to the protein kinase superfamily. CAMK Ser/Thr protein kinase family. NPR/HAL subfamily. HAL5 sub-subfamily.

It is found in the cytoplasm. It catalyses the reaction L-seryl-[protein] + ATP = O-phospho-L-seryl-[protein] + ADP + H(+). The catalysed reaction is L-threonyl-[protein] + ATP = O-phospho-L-threonyl-[protein] + ADP + H(+). The protein is Probable serine/threonine-protein kinase KKQ8 (KKQ8) of Candida glabrata (strain ATCC 2001 / BCRC 20586 / JCM 3761 / NBRC 0622 / NRRL Y-65 / CBS 138) (Yeast).